A 280-amino-acid polypeptide reads, in one-letter code: uncharacterized protein (280 aa).

The signal sequence occupies residues 1–35; the sequence is MQGQVLKKVLKKYVHIGMCTLFLHAILLFPCVAQA.

This is an uncharacterized protein from Treponema pallidum (strain Nichols).